Here is a 286-residue protein sequence, read N- to C-terminus: Ribosome-inactivating protein momordin II (286 aa).

A signal peptide spans 1–23 (MVKCLLLSFLIIAIFIGVPTAKG). Glu181 is a catalytic residue.

This sequence belongs to the ribosome-inactivating protein family. Type 1 RIP subfamily.

The catalysed reaction is Endohydrolysis of the N-glycosidic bond at one specific adenosine on the 28S rRNA.. This chain is Ribosome-inactivating protein momordin II, found in Momordica balsamina (Bitter gourd).